A 266-amino-acid polypeptide reads, in one-letter code: Glucosamine-6-phosphate deaminase (266 aa).

The active-site Proton acceptor; for enolization step is the Asp-72. Asp-141 serves as the catalytic For ring-opening step. His-143 functions as the Proton acceptor; for ring-opening step in the catalytic mechanism. The active-site For ring-opening step is the Glu-148.

The protein belongs to the glucosamine/galactosamine-6-phosphate isomerase family. NagB subfamily. As to quaternary structure, homohexamer; trimer of disulfide-linked dimers.

The enzyme catalyses alpha-D-glucosamine 6-phosphate + H2O = beta-D-fructose 6-phosphate + NH4(+). The protein operates within amino-sugar metabolism; N-acetylneuraminate degradation; D-fructose 6-phosphate from N-acetylneuraminate: step 5/5. Its activity is regulated as follows. Allosterically activated by N-acetylglucosamine 6-phosphate (GlcNAc6P). Catalyzes the reversible isomerization-deamination of glucosamine 6-phosphate (GlcN6P) to form fructose 6-phosphate (Fru6P) and ammonium ion. This chain is Glucosamine-6-phosphate deaminase, found in Escherichia coli O6:H1 (strain CFT073 / ATCC 700928 / UPEC).